Here is a 626-residue protein sequence, read N- to C-terminus: MDHDTEVIVKDFNSILEELTFNSRPIITTLTKLAEENISCAQYFVDAIESRIEKCMPKQKLYAFYALDSICKNVGSPYTIYFSRNLFNLYKRTYLLVDNTTRTKLINMFKLWLNPNDTGLPLFEGSALEKIEQFLIKASALHQKNLQAMLPTPTVPLLLRDIDKLTCLTSERLKNQPNDEKLKMKLLVLSQLKQELKREKLTLNALKQVQMQLRQVFSQDQQVLQERMRYHELQQQQQQQQQQQQQQQQQQQQYHETKDMVGSYTQNSNSAIPLFGNNSDTTNQQNSLSSSLFGNISGVESFQEIEKKKSLNKINNLYASLKAEGLIYTPPKESIVTLYKKLNGHSNYSLDSHEKQLMKNLPKIPLLNDILSDCKAYFATVNIDVLNNPSLQLSEQTLLQENPIVQNNLIHLLYRSKPNKCSVCGKRFGNSESEKLLQNEHLDWHFRINTRIKGSQNTANTGISNSNLNTTTTRKNIQSRNWYLSDSQWAAFKDDEITSTKHKNDYTDPHANKNIDKSALNIHADENDEGSVDNTLGSDRSNELEIRGKYVVVPETSQDMAFKCPICKETVTGVYDEESGEWVWKNTIEVNGKYFHSTCYHETSQNSSKSNSGKVGLDDLKKLVTK.

The interaction with RBP1 CTD (CID) stretch occupies residues Met-1–Lys-130. One can recognise a CID domain in the interval Asp-4–Ser-139. The disordered stretch occupies residues Ser-263–Asn-286.

In terms of assembly, component of the CFIA complex, which is composed of RNA14, RNA15, PCF11 and CLP1. Interacts with RNA14, RNA15 and RTT103. Interacts directly with the phosphorylated CTD domain of RPB1/RNA polymerase II.

Its subcellular location is the nucleus. Component of the cleavage factor IA (CFIA) complex, which is involved in the endonucleolytic cleavage during polyadenylation-dependent pre-mRNA 3'-end formation and cooperates with cleavage factor NAB4/CFIB and the cleavage and polyadenylation factor (CPF) complex. Independently involved in RNA polymerase II transcript termination. Binds RNA. Seems to bridge RNA polymerase II and the native transcript and may be involved in dismantling the RNA polymerase II elongation complex. This chain is Protein PCF11 (PCF11), found in Saccharomyces cerevisiae (strain ATCC 204508 / S288c) (Baker's yeast).